An 848-amino-acid chain; its full sequence is Adenylate cyclase (848 aa).

The catalytic stretch occupies residues 1 to 535 (MYLYIETLKQ…DVSHHFPLRL (535 aa)). A regulatory region spans residues 541 to 848 (KALYSPCEIR…DTPLLQQYFS (308 aa)). At His-609 the chain carries Phosphohistidine; by CRR.

Belongs to the adenylyl cyclase class-1 family.

It localises to the cytoplasm. The catalysed reaction is ATP = 3',5'-cyclic AMP + diphosphate. The protein is Adenylate cyclase (cyaA) of Escherichia coli O157:H7.